A 436-amino-acid polypeptide reads, in one-letter code: Testican-3 (436 aa).

The first 22 residues, M1–A22, serve as a signal peptide directing secretion. Cystine bridges form between C90–C101, C95–C111, C139–C169, C142–C162, C151–C183, C317–C341, C352–C359, and C361–C380. Positions G133–C185 constitute a Kazal-like domain. The Thyroglobulin type-1 domain occupies D314–C380. O-linked (Xyl...) (glycosaminoglycan) serine glycans are attached at residues S387 and S392. Residues G393–I436 are disordered. Positions T399–D430 are enriched in acidic residues.

Post-translationally, contains chondroitin sulfate and heparan sulfate O-linked oligosaccharides. In terms of tissue distribution, expressed in brain.

The protein localises to the secreted. Its subcellular location is the extracellular space. It is found in the extracellular matrix. In terms of biological role, may participate in diverse steps of neurogenesis. Inhibits the processing of pro-matrix metalloproteinase 2 (MMP-2) by MT1-MMP and MT3-MMP. May interfere with tumor invasion. This Mus musculus (Mouse) protein is Testican-3 (Spock3).